The sequence spans 91 residues: PqqA binding protein 1 (91 aa).

This sequence belongs to the PqqD family. Monomer. Interacts with PqqE.

It functions in the pathway cofactor biosynthesis; pyrroloquinoline quinone biosynthesis. Functions as a PqqA binding protein and presents PqqA to PqqE, in the pyrroloquinoline quinone (PQQ) biosynthetic pathway. The chain is PqqA binding protein 1 (pqqD1) from Pseudomonas putida (strain ATCC 47054 / DSM 6125 / CFBP 8728 / NCIMB 11950 / KT2440).